A 217-amino-acid chain; its full sequence is Probable nicotinate-nucleotide adenylyltransferase (217 aa).

This sequence belongs to the NadD family.

The catalysed reaction is nicotinate beta-D-ribonucleotide + ATP + H(+) = deamido-NAD(+) + diphosphate. Its pathway is cofactor biosynthesis; NAD(+) biosynthesis; deamido-NAD(+) from nicotinate D-ribonucleotide: step 1/1. Catalyzes the reversible adenylation of nicotinate mononucleotide (NaMN) to nicotinic acid adenine dinucleotide (NaAD). The chain is Probable nicotinate-nucleotide adenylyltransferase from Baumannia cicadellinicola subsp. Homalodisca coagulata.